The sequence spans 160 residues: V-type proton ATPase subunit c (160 aa).

The Lumenal portion of the chain corresponds to 1-6 (MSDLCP). The helical transmembrane segment at 7-27 (VYAPFFGSIGCAAAIVFTCFG) threads the bilayer. Topologically, residues 28-53 (ASYGTAKSGVGICATSVTRPDLLVKN) are cytoplasmic. Residues 54–74 (VVPVVMAGIIAIYGLVVSVLV) form a helical membrane-spanning segment. Over 75–90 (SDSLSQKQALYTGFIQ) the chain is Lumenal. Residues 91–111 (LGAGLSVGLSGLAAGFAIGIV) traverse the membrane as a helical segment. Residues 112–129 (GDAGVRGTAQQPRLFVGM) are Cytoplasmic-facing. The helical transmembrane segment at 130 to 150 (ILILIFAEVLGLYGLIVALLL) threads the bilayer. Residues 151–160 (NSRASQDVTC) are Lumenal-facing.

The protein belongs to the V-ATPase proteolipid subunit family. V-ATPase is a heteromultimeric enzyme composed of a peripheral catalytic V1 complex (components A to H) attached to an integral membrane V0 proton pore complex (components: a, c, c', c'', d, e, f and VOA1). The decameric c-ring forms the proton-conducting pore, and is composed of eight proteolipid subunits c, one subunit c' and one subunit c''.

Its subcellular location is the vacuole membrane. In terms of biological role, proton-conducting pore forming subunit of the V0 complex of vacuolar(H+)-ATPase (V-ATPase), a multisubunit enzyme composed of a peripheral complex (V1) that hydrolyzes ATP and a membrane integral complex (V0) that translocates protons. V-ATPase is responsible for acidifying and maintaining the pH of intracellular compartments. In Candida tropicalis (Yeast), this protein is V-type proton ATPase subunit c (VMA3).